The chain runs to 464 residues: Dihydrolipoyllysine-residue succinyltransferase component of 2-oxoglutarate dehydrogenase complex 1, mitochondrial (464 aa).

The transit peptide at 1-86 (MMLRAVFRRA…TALQRWVRPF (86 aa)) directs the protein to the mitochondrion. A Lipoyl-binding domain is found at 93–168 (VVEAVVPHMG…EPGNKVARIS (76 aa)). Lys-134 carries the post-translational modification N6-lipoyllysine. Positions 168–242 (STSADAVSHV…DRERRVPMTR (75 aa)) are disordered. Positions 196–210 (EKPKVESTKVAEKPK) are enriched in basic and acidic residues. A compositionally biased stretch (pro residues) spans 211 to 220 (APSPPPPPPS). Active-site residues include His-435 and Asp-439.

It belongs to the 2-oxoacid dehydrogenase family. As to quaternary structure, forms a 24-polypeptide structural core with octahedral symmetry. (R)-lipoate is required as a cofactor.

The protein resides in the mitochondrion. The enzyme catalyses N(6)-[(R)-dihydrolipoyl]-L-lysyl-[protein] + succinyl-CoA = N(6)-[(R)-S(8)-succinyldihydrolipoyl]-L-lysyl-[protein] + CoA. The protein operates within amino-acid degradation; L-lysine degradation via saccharopine pathway; glutaryl-CoA from L-lysine: step 6/6. The 2-oxoglutarate dehydrogenase complex catalyzes the overall conversion of 2-oxoglutarate to succinyl-CoA and CO(2). It contains multiple copies of three enzymatic components: 2-oxoglutarate dehydrogenase (E1), dihydrolipoamide succinyltransferase (E2) and lipoamide dehydrogenase (E3). This is Dihydrolipoyllysine-residue succinyltransferase component of 2-oxoglutarate dehydrogenase complex 1, mitochondrial from Arabidopsis thaliana (Mouse-ear cress).